Reading from the N-terminus, the 579-residue chain is Aspartate--tRNA(Asp/Asn) ligase (579 aa).

L-aspartate is bound at residue glutamate 171. Positions 195 to 198 are aspartate; it reads QLFK. Arginine 217 contacts L-aspartate. ATP contacts are provided by residues 217-219 and glutamine 226; that span reads RDE. Histidine 444 contacts L-aspartate. Residue glutamate 475 coordinates ATP. Arginine 482 is a binding site for L-aspartate. 527–530 is a binding site for ATP; that stretch reads GLDR.

This sequence belongs to the class-II aminoacyl-tRNA synthetase family. Type 1 subfamily. As to quaternary structure, homodimer.

It localises to the cytoplasm. It catalyses the reaction tRNA(Asx) + L-aspartate + ATP = L-aspartyl-tRNA(Asx) + AMP + diphosphate. In terms of biological role, aspartyl-tRNA synthetase with relaxed tRNA specificity since it is able to aspartylate not only its cognate tRNA(Asp) but also tRNA(Asn). Reaction proceeds in two steps: L-aspartate is first activated by ATP to form Asp-AMP and then transferred to the acceptor end of tRNA(Asp/Asn). In Thermotoga maritima (strain ATCC 43589 / DSM 3109 / JCM 10099 / NBRC 100826 / MSB8), this protein is Aspartate--tRNA(Asp/Asn) ligase.